Consider the following 189-residue polypeptide: GTPase NRas (189 aa).

GTP-binding positions include 10-18 (GAGGVGKSA) and 29-30 (VD). Positions 32 to 40 (YDPTIEDSY) match the Effector region motif. Position 57–61 (57–61 (DTAGQ)) interacts with GTP. Ser-89 carries the post-translational modification Phosphoserine. GTP is bound at residue 116–119 (NKCD). The interval 166-185 (YRMKKLNSSDDGTQGCMGLP) is hypervariable region. A Glycyl lysine isopeptide (Lys-Gly) (interchain with G-Cter in ubiquitin) cross-link involves residue Lys-170. A lipid anchor (S-palmitoyl cysteine) is attached at Cys-181. Cys-186 carries the S-farnesyl cysteine lipid modification. The propeptide at 187-189 (VVM) is removed in mature form.

This sequence belongs to the small GTPase superfamily. Ras family. Interacts (active GTP-bound form preferentially) with RGS14. Interacts (active GTP-bound form) with RASSF7. Interacts (active GTP-bound form) with both SHOC2 and PP1c (all isoforms) to form a tertiary complex; SHOC2 and PP1c preferably bind M-Ras/MRAS, but they also bind K-Ras/KRAS, N-Ras/NRAS and H-Ras/HRAS. Palmitoylated by the ZDHHC9-GOLGA7 complex. Depalmitoylated by ABHD17A, ABHD17B and ABHD17C. A continuous cycle of de- and re-palmitoylation regulates rapid exchange between plasma membrane and Golgi. In terms of processing, acetylation at Lys-104 prevents interaction with guanine nucleotide exchange factors (GEFs). Post-translationally, ubiquitinated by the BCR(LZTR1) E3 ubiquitin ligase complex at Lys-170 in a non-degradative manner, leading to inhibit Ras signaling by decreasing Ras association with membranes. Phosphorylation at Ser-89 enhances NRAS association with its downstream effectors.

Its subcellular location is the cell membrane. The protein resides in the golgi apparatus membrane. The catalysed reaction is GTP + H2O = GDP + phosphate + H(+). Its activity is regulated as follows. Alternates between an inactive form bound to GDP and an active form bound to GTP. Activated by a guanine nucleotide-exchange factor (GEF) and inactivated by a GTPase-activating protein (GAP). Its function is as follows. Ras proteins bind GDP/GTP and possess intrinsic GTPase activity. The polypeptide is GTPase NRas (NRAS) (Pongo abelii (Sumatran orangutan)).